A 186-amino-acid chain; its full sequence is MRLVETIVSGMAGRYATALFELAEEAGSTDAVAADLDRLKGLIAESADLERLVKSPVFTAEEQVKAVGAVLAAAGITGIAANFVKLVAQNRRLFALPSMFDAFAALVAAKRGQTVAKVTVAEPLNDAHQAALKEALAQQTGKDVSLDVTVDPSILGGLIVKLGSRMVDASLKTKLNSIRHAMKEVR.

This sequence belongs to the ATPase delta chain family. F-type ATPases have 2 components, F(1) - the catalytic core - and F(0) - the membrane proton channel. F(1) has five subunits: alpha(3), beta(3), gamma(1), delta(1), epsilon(1). F(0) has three main subunits: a(1), b(2) and c(10-14). The alpha and beta chains form an alternating ring which encloses part of the gamma chain. F(1) is attached to F(0) by a central stalk formed by the gamma and epsilon chains, while a peripheral stalk is formed by the delta and b chains.

It is found in the cell inner membrane. F(1)F(0) ATP synthase produces ATP from ADP in the presence of a proton or sodium gradient. F-type ATPases consist of two structural domains, F(1) containing the extramembraneous catalytic core and F(0) containing the membrane proton channel, linked together by a central stalk and a peripheral stalk. During catalysis, ATP synthesis in the catalytic domain of F(1) is coupled via a rotary mechanism of the central stalk subunits to proton translocation. In terms of biological role, this protein is part of the stalk that links CF(0) to CF(1). It either transmits conformational changes from CF(0) to CF(1) or is implicated in proton conduction. The sequence is that of ATP synthase subunit delta from Azorhizobium caulinodans (strain ATCC 43989 / DSM 5975 / JCM 20966 / LMG 6465 / NBRC 14845 / NCIMB 13405 / ORS 571).